The sequence spans 282 residues: UPF0761 membrane protein HAPS_1376 (282 aa).

The next 6 membrane-spanning stretches (helical) occupy residues 32–52, 89–109, 124–144, 170–190, 202–222, and 234–254; these read LLSLVPLIMVVFSVFTLLPIF, MGIISIIGLVVVAVMLISSID, VILSFVVYLAVLIFAPIFAGA, LLKFIPFVLTWLLFALVYLIV, VGALFAGVFFTLGKQIFIWYI, and ALATIPIMIVWIHLSWQVVLL.

This sequence belongs to the UPF0761 family.

The protein resides in the cell inner membrane. This chain is UPF0761 membrane protein HAPS_1376, found in Glaesserella parasuis serovar 5 (strain SH0165) (Haemophilus parasuis).